An 85-amino-acid chain; its full sequence is Insect toxin 2-53 (85 aa).

The N-terminal stretch at Met1–Ala21 is a signal peptide. One can recognise an LCN-type CS-alpha/beta domain in the interval Asp22–Gly82. 4 disulfides stabilise this stretch: Cys31-Cys81, Cys35-Cys56, Cys42-Cys63, and Cys46-Cys65. A Glycine amide modification is found at Gly82.

This sequence belongs to the long (4 C-C) scorpion toxin superfamily. Sodium channel inhibitor family. Beta subfamily. In terms of tissue distribution, expressed by the venom gland.

It localises to the secreted. Depressant insect toxins cause a transient contraction paralysis followed by a slow flaccid paralysis. They bind voltage-independently to sodium channels (Nav) and block action potentials, primarily by depolarizing the axonal membrane and suppressing the sodium current. The protein is Insect toxin 2-53 of Leiurus hebraeus (Hebrew deathstalker scorpion).